We begin with the raw amino-acid sequence, 496 residues long: Aldehyde dehydrogenase 1A1 (496 aa).

2 positions are modified to N6-acetyllysine: K86 and K123. NAD(+) contacts are provided by residues 162 to 165 (IPWN), 188 to 191 (KPAE), 221 to 222 (GP), and 241 to 242 (GS). At K247 the chain carries N6-acetyllysine. The Proton acceptor role is filled by E264. 264-266 (ELG) contributes to the NAD(+) binding site. The active-site Nucleophile is C298. Residues 331-496 (LAPEVNQGPQ…VTVKISQKNS (166 aa)) form a mediates interaction with PRMT3 region. 344–348 (EQYNK) is a binding site for NAD(+). 2 positions are modified to N6-acetyllysine: K348 and K362. 395–397 (EIF) contributes to the NAD(+) binding site. At K405 the chain carries N6-acetyllysine. S408 carries the phosphoserine modification. K414, K430, and K490 each carry N6-acetyllysine.

It belongs to the aldehyde dehydrogenase family. In terms of assembly, homotetramer. Interacts with PRMT3; the interaction is direct, inhibits ALDH1A1 aldehyde dehydrogenase activity and is independent of the methyltransferase activity of PRMT3. In terms of processing, the N-terminus is blocked most probably by acetylation.

It is found in the cytoplasm. The protein localises to the cytosol. It localises to the cell projection. The protein resides in the axon. The catalysed reaction is an aldehyde + NAD(+) + H2O = a carboxylate + NADH + 2 H(+). The enzyme catalyses all-trans-retinal + NAD(+) + H2O = all-trans-retinoate + NADH + 2 H(+). It carries out the reaction 9-cis-retinal + NAD(+) + H2O = 9-cis-retinoate + NADH + 2 H(+). It catalyses the reaction 11-cis-retinal + NAD(+) + H2O = 11-cis-retinoate + NADH + 2 H(+). The catalysed reaction is 13-cis-retinal + NAD(+) + H2O = 13-cis-retinoate + NADH + 2 H(+). The enzyme catalyses (E)-4-hydroxynon-2-enal + NAD(+) + H2O = (E)-4-hydroxynon-2-enoate + NADH + 2 H(+). It carries out the reaction malonaldehyde + NAD(+) + H2O = 3-oxopropanoate + NADH + 2 H(+). It catalyses the reaction hexanal + NAD(+) + H2O = hexanoate + NADH + 2 H(+). The catalysed reaction is propanal + NAD(+) + H2O = propanoate + NADH + 2 H(+). The enzyme catalyses 3-deoxyglucosone + NAD(+) + H2O = 2-dehydro-3-deoxy-D-gluconate + NADH + 2 H(+). It carries out the reaction acetaldehyde + NAD(+) + H2O = acetate + NADH + 2 H(+). It catalyses the reaction benzaldehyde + NAD(+) + H2O = benzoate + NADH + 2 H(+). The catalysed reaction is 4-aminobutanal + NAD(+) + H2O = 4-aminobutanoate + NADH + 2 H(+). It participates in cofactor metabolism; retinol metabolism. Its function is as follows. Cytosolic dehydrogenase that catalyzes the irreversible oxidation of a wide range of aldehydes to their corresponding carboxylic acid. Functions downstream of retinol dehydrogenases and catalyzes the oxidation of retinaldehyde into retinoic acid, the second step in the oxidation of retinol/vitamin A into retinoic acid. This pathway is crucial to control the levels of retinol and retinoic acid, two important molecules which excess can be teratogenic and cytotoxic. Also oxidizes aldehydes resulting from lipid peroxidation like (E)-4-hydroxynon-2-enal/HNE, malonaldehyde and hexanal that form protein adducts and are highly cytotoxic. By participating for instance to the clearance of (E)-4-hydroxynon-2-enal/HNE in the lens epithelium prevents the formation of HNE-protein adducts and lens opacification. Functions also downstream of fructosamine-3-kinase in the fructosamine degradation pathway by catalyzing the oxidation of 3-deoxyglucosone, the carbohydrate product of fructosamine 3-phosphate decomposition, which is itself a potent glycating agent that may react with lysine and arginine side-chains of proteins. Also has an aminobutyraldehyde dehydrogenase activity and is probably part of an alternative pathway for the biosynthesis of GABA/4-aminobutanoate in midbrain, thereby playing a role in GABAergic synaptic transmission. This chain is Aldehyde dehydrogenase 1A1, found in Oryctolagus cuniculus (Rabbit).